A 737-amino-acid polypeptide reads, in one-letter code: Disintegrin and metalloproteinase domain-containing protein 2 (737 aa).

Residues 1–18 (MWLLLLLLSGLSRLGGLS) form the signal peptide. Residues 19 to 180 (EPQTEGTREK…YKIRSIKPQR (162 aa)) constitute a propeptide that is removed on maturation. Residues 19–688 (EPQTEGTREK…ASAYRSKSAR (670 aa)) are Extracellular-facing. N-linked (GlcNAc...) asparagine glycans are attached at residues N128 and N226. One can recognise a Peptidase M12B domain in the interval 184–381 (HYLEIHIVVE…QSSHCLQNQP (198 aa)). Cystine bridges form between C293–C376, C335–C360, C337–C342, and C450–C470. 4 N-linked (GlcNAc...) asparagine glycosylation sites follow: N359, N464, N491, and N571. Positions 389-478 (MAVCGNGELE…VCEEDFFVQD (90 aa)) constitute a Disintegrin domain. The region spanning 617–650 (LNYDCTPEKCNHHGVCNNKKHCHCEPTYLPPDCK) is the EGF-like domain. 3 cysteine pairs are disulfide-bonded: C621–C632, C626–C638, and C640–C649. Residues 689–709 (WPFFLIIPFYVVILVLIGMLV) form a helical membrane-spanning segment. Residues 710–737 (KVYSQRKKWRMDDFSSEEQFESESESKD) lie on the Cytoplasmic side of the membrane. S731 carries the phosphoserine modification.

In terms of assembly, heterodimer with ADAM1/fertilin subunit alpha. Post-translationally, the prodomain and the metalloprotease domain are cleaved during the epididymal maturation of the spermatozoa.

The protein resides in the membrane. Functionally, sperm surface membrane protein that may be involved in sperm-egg plasma membrane adhesion and fusion during fertilization. Could have a direct role in sperm-zona binding or migration of sperm from the uterus into the oviduct. Interactions with egg membrane could be mediated via binding between its disintegrin-like domain to one or more integrins receptors on the egg. This is a non catalytic metalloprotease-like protein. In Rattus norvegicus (Rat), this protein is Disintegrin and metalloproteinase domain-containing protein 2 (Adam2).